The sequence spans 291 residues: RPE-retinal G protein-coupled receptor (291 aa).

The Extracellular portion of the chain corresponds to 1-15 (MAATRALPAGLGELE). Residues 16–36 (VLAVGTVLLMEALSGISLNGL) form a helical membrane-spanning segment. Over 37–52 (TIFSFCKTPDLRTPSN) the chain is Cytoplasmic. Residues 53–73 (LLVLSLALADTGISLNALVAA) form a helical membrane-spanning segment. Topologically, residues 74–91 (VSSLLRRWPHGSEGCQVH) are extracellular. Cysteine 88 and cysteine 162 form a disulfide bridge. The helical transmembrane segment at 92-112 (GFQGFATALASICGSAAVAWG) threads the bilayer. Topologically, residues 113-130 (RYHHYCTRRQLAWDTAIP) are cytoplasmic. Residues 131-151 (LVLFVWMSSAFWASLPLMGWG) traverse the membrane as a helical segment. Over 152–175 (HYDYEPVGTCCTLDYSRGDRNFIS) the chain is Extracellular. A helical transmembrane segment spans residues 176 to 196 (FLFTMAFFNFLVPLFITHTSY). Residues 197-219 (RFMEQKFSRSGHLPVNTTLPGRM) lie on the Cytoplasmic side of the membrane. The chain crosses the membrane as a helical span at residues 220 to 240 (LLLGWGPYALLYLYAAIADVS). The Extracellular segment spans residues 241 to 247 (FISPKLQ). A helical transmembrane segment spans residues 248–268 (MVPALIAKTMPTINAINYALH). N6-(retinylidene)lysine is present on lysine 255. Residues 269-291 (REMVCRGTWQCLSPQKSKKDRTQ) are Cytoplasmic-facing.

It belongs to the G-protein coupled receptor 1 family. Opsin subfamily. In terms of processing, covalently binds all-trans- and 11-cis-retinal.

The protein resides in the membrane. In terms of biological role, receptor for all-trans- and 11-cis-retinal. Binds preferentially to the former and may catalyze the isomerization of the chromophore by a retinochrome-like mechanism. The sequence is that of RPE-retinal G protein-coupled receptor (Rgr) from Mus musculus (Mouse).